Here is a 245-residue protein sequence, read N- to C-terminus: tRNA pseudouridine synthase A (245 aa).

Catalysis depends on aspartate 52, which acts as the Nucleophile. Tyrosine 111 contacts substrate.

Belongs to the tRNA pseudouridine synthase TruA family. Homodimer.

The catalysed reaction is uridine(38/39/40) in tRNA = pseudouridine(38/39/40) in tRNA. Functionally, formation of pseudouridine at positions 38, 39 and 40 in the anticodon stem and loop of transfer RNAs. The chain is tRNA pseudouridine synthase A from Zymomonas mobilis subsp. mobilis (strain ATCC 31821 / ZM4 / CP4).